A 155-amino-acid chain; its full sequence is NADPH-dependent 7-cyano-7-deazaguanine reductase (155 aa).

C53 functions as the Thioimide intermediate in the catalytic mechanism. D60 (proton donor) is an active-site residue. Substrate-binding positions include 75–77 (VES) and 94–95 (HE).

This sequence belongs to the GTP cyclohydrolase I family. QueF type 1 subfamily.

Its subcellular location is the cytoplasm. It catalyses the reaction 7-aminomethyl-7-carbaguanine + 2 NADP(+) = 7-cyano-7-deazaguanine + 2 NADPH + 3 H(+). Its pathway is tRNA modification; tRNA-queuosine biosynthesis. Catalyzes the NADPH-dependent reduction of 7-cyano-7-deazaguanine (preQ0) to 7-aminomethyl-7-deazaguanine (preQ1). In Brucella suis (strain ATCC 23445 / NCTC 10510), this protein is NADPH-dependent 7-cyano-7-deazaguanine reductase.